Reading from the N-terminus, the 458-residue chain is Serine--tRNA ligase (458 aa).

Position 255–257 (255–257 (TSE)) interacts with L-serine. ATP contacts are provided by residues 286–288 (RKE) and Val-302. Position 309 (Glu-309) interacts with L-serine. 373 to 376 (ELVS) provides a ligand contact to ATP. Thr-409 provides a ligand contact to L-serine.

The protein belongs to the class-II aminoacyl-tRNA synthetase family. Type-1 seryl-tRNA synthetase subfamily. As to quaternary structure, homodimer. The tRNA molecule binds across the dimer.

Its subcellular location is the cytoplasm. It catalyses the reaction tRNA(Ser) + L-serine + ATP = L-seryl-tRNA(Ser) + AMP + diphosphate + H(+). The catalysed reaction is tRNA(Sec) + L-serine + ATP = L-seryl-tRNA(Sec) + AMP + diphosphate + H(+). It participates in aminoacyl-tRNA biosynthesis; selenocysteinyl-tRNA(Sec) biosynthesis; L-seryl-tRNA(Sec) from L-serine and tRNA(Sec): step 1/1. Its function is as follows. Catalyzes the attachment of serine to tRNA(Ser). Is also able to aminoacylate tRNA(Sec) with serine, to form the misacylated tRNA L-seryl-tRNA(Sec), which will be further converted into selenocysteinyl-tRNA(Sec). This chain is Serine--tRNA ligase, found in Ignicoccus hospitalis (strain KIN4/I / DSM 18386 / JCM 14125).